We begin with the raw amino-acid sequence, 247 residues long: UPF0280 protein MmarC6_1437 (247 aa).

Belongs to the UPF0280 family.

The sequence is that of UPF0280 protein MmarC6_1437 from Methanococcus maripaludis (strain C6 / ATCC BAA-1332).